Consider the following 332-residue polypeptide: Holliday junction branch migration complex subunit RuvB (332 aa).

The interval 1–181 (MSRILDNEIM…FGITGHMEYY (181 aa)) is large ATPase domain (RuvB-L). ATP is bound by residues L20, R21, G62, K65, T66, T67, 128 to 130 (EDF), R171, Y181, and R218. Mg(2+) is bound at residue T66. Positions 182–252 (AHAGLTEIVE…ITDKALTMLD (71 aa)) are small ATPAse domain (RuvB-S). A head domain (RuvB-H) region spans residues 255 to 332 (HEGLDYVDQK…EHLGYEYSEK (78 aa)). The DNA site is built by R291, R310, R312, and R315.

The protein belongs to the RuvB family. As to quaternary structure, homohexamer. Forms an RuvA(8)-RuvB(12)-Holliday junction (HJ) complex. HJ DNA is sandwiched between 2 RuvA tetramers; dsDNA enters through RuvA and exits via RuvB. An RuvB hexamer assembles on each DNA strand where it exits the tetramer. Each RuvB hexamer is contacted by two RuvA subunits (via domain III) on 2 adjacent RuvB subunits; this complex drives branch migration. In the full resolvosome a probable DNA-RuvA(4)-RuvB(12)-RuvC(2) complex forms which resolves the HJ.

It localises to the cytoplasm. The enzyme catalyses ATP + H2O = ADP + phosphate + H(+). The RuvA-RuvB-RuvC complex processes Holliday junction (HJ) DNA during genetic recombination and DNA repair, while the RuvA-RuvB complex plays an important role in the rescue of blocked DNA replication forks via replication fork reversal (RFR). RuvA specifically binds to HJ cruciform DNA, conferring on it an open structure. The RuvB hexamer acts as an ATP-dependent pump, pulling dsDNA into and through the RuvAB complex. RuvB forms 2 homohexamers on either side of HJ DNA bound by 1 or 2 RuvA tetramers; 4 subunits per hexamer contact DNA at a time. Coordinated motions by a converter formed by DNA-disengaged RuvB subunits stimulates ATP hydrolysis and nucleotide exchange. Immobilization of the converter enables RuvB to convert the ATP-contained energy into a lever motion, pulling 2 nucleotides of DNA out of the RuvA tetramer per ATP hydrolyzed, thus driving DNA branch migration. The RuvB motors rotate together with the DNA substrate, which together with the progressing nucleotide cycle form the mechanistic basis for DNA recombination by continuous HJ branch migration. Branch migration allows RuvC to scan DNA until it finds its consensus sequence, where it cleaves and resolves cruciform DNA. This chain is Holliday junction branch migration complex subunit RuvB, found in Streptococcus pneumoniae (strain JJA).